A 700-amino-acid chain; its full sequence is Polyribonucleotide nucleotidyltransferase (700 aa).

Mg(2+) is bound by residues Asp491 and Asp497. Residues 558–617 (PNYAVIEINPDKIRDVIGKGGATIRQLTEETGAVIDIDDAGTIRIFGENKAATKAAIAKI) form the KH domain. An S1 motif domain is found at 627-695 (GKTYEGTVAR…NRGRIKLTMK (69 aa)).

Belongs to the polyribonucleotide nucleotidyltransferase family. In terms of assembly, component of the RNA degradosome, which is a multiprotein complex involved in RNA processing and mRNA degradation. Mg(2+) serves as cofactor.

It localises to the cytoplasm. The catalysed reaction is RNA(n+1) + phosphate = RNA(n) + a ribonucleoside 5'-diphosphate. Its function is as follows. Involved in mRNA degradation. Catalyzes the phosphorolysis of single-stranded polyribonucleotides processively in the 3'- to 5'-direction. This chain is Polyribonucleotide nucleotidyltransferase, found in Psychrobacter cryohalolentis (strain ATCC BAA-1226 / DSM 17306 / VKM B-2378 / K5).